We begin with the raw amino-acid sequence, 1303 residues long: Alpha,alpha-trehalose-phosphate synthase [UDP-forming] 2 (1303 aa).

2 disordered regions span residues M1–T48 and L205–K251. Low complexity predominate over residues S212–S221.

This sequence in the N-terminal section; belongs to the glycosyltransferase 20 family. It in the C-terminal section; belongs to the gob-1 trehalose phosphatase family.

The enzyme catalyses D-glucose 6-phosphate + UDP-alpha-D-glucose = alpha,alpha-trehalose 6-phosphate + UDP + H(+). In terms of biological role, catalyzes the production of trehalose from glucose-6-phosphate and UDP-alpha-D-glucose in a 2 step process. The chain is Alpha,alpha-trehalose-phosphate synthase [UDP-forming] 2 (tps-2) from Aphelenchoides avenae (Mycophagous nematode worm).